A 231-amino-acid polypeptide reads, in one-letter code: NADH-quinone oxidoreductase subunit C (231 aa).

It belongs to the complex I 30 kDa subunit family. NDH-1 is composed of 14 different subunits. Subunits NuoB, C, D, E, F, and G constitute the peripheral sector of the complex.

Its subcellular location is the cell membrane. The catalysed reaction is a quinone + NADH + 5 H(+)(in) = a quinol + NAD(+) + 4 H(+)(out). NDH-1 shuttles electrons from NADH, via FMN and iron-sulfur (Fe-S) centers, to quinones in the respiratory chain. The immediate electron acceptor for the enzyme in this species is believed to be a menaquinone. Couples the redox reaction to proton translocation (for every two electrons transferred, four hydrogen ions are translocated across the cytoplasmic membrane), and thus conserves the redox energy in a proton gradient. This Mycobacterium sp. (strain JLS) protein is NADH-quinone oxidoreductase subunit C.